A 1150-amino-acid polypeptide reads, in one-letter code: ATP-dependent helicase/deoxyribonuclease subunit B (1150 aa).

Glycine 8–serine 15 is a binding site for ATP. 4 residues coordinate [4Fe-4S] cluster: cysteine 786, cysteine 1106, cysteine 1109, and cysteine 1115.

It belongs to the helicase family. AddB/RexB type 1 subfamily. Heterodimer of AddA and AddB. Mg(2+) serves as cofactor. [4Fe-4S] cluster is required as a cofactor.

The heterodimer acts as both an ATP-dependent DNA helicase and an ATP-dependent, dual-direction single-stranded exonuclease. Recognizes the chi site generating a DNA molecule suitable for the initiation of homologous recombination. The AddB subunit has 5' -&gt; 3' nuclease activity but not helicase activity. The polypeptide is ATP-dependent helicase/deoxyribonuclease subunit B (Clostridium botulinum (strain Okra / Type B1)).